Consider the following 113-residue polypeptide: Hydrogenase maturation factor HypA (113 aa).

Ni(2+) is bound at residue H2. Zn(2+) contacts are provided by C73, C76, C89, and C92.

The protein belongs to the HypA/HybF family.

In terms of biological role, involved in the maturation of [NiFe] hydrogenases. Required for nickel insertion into the metal center of the hydrogenase. The protein is Hydrogenase maturation factor HypA of Azotobacter chroococcum mcd 1.